Here is an 898-residue protein sequence, read N- to C-terminus: Coatomer subunit gamma (898 aa).

HEAT repeat units follow at residues 62-99 (TEAT…ISQD), 170-207 (EIVK…HDRL), 280-317 (KEIN…TNPT), 319-352 (VIPC…GNES), 353-389 (NVER…KFPK), and 392-427 (KHLI…NIPE). The disordered stretch occupies residues 592–631 (GKSPFSTGASKKGDSVTGTPKSNNASNNNNNNEESSGPES). Residues 613-626 (SNNASNNNNNNEES) are compositionally biased toward low complexity.

The protein belongs to the COPG family. In terms of assembly, oligomeric complex that consists of at least the alpha, beta, beta', gamma, delta, epsilon and zeta subunits.

It localises to the cytoplasm. It is found in the golgi apparatus membrane. The protein resides in the cytoplasmic vesicle. Its subcellular location is the COPI-coated vesicle membrane. In terms of biological role, the coatomer is a cytosolic protein complex that binds to dilysine motifs and reversibly associates with Golgi non-clathrin-coated vesicles, which further mediate biosynthetic protein transport from the ER, via the Golgi up to the trans Golgi network. Coatomer complex is required for budding from Golgi membranes, and is essential for the retrograde Golgi-to-ER transport of dilysine-tagged proteins. This is Coatomer subunit gamma (copG) from Dictyostelium discoideum (Social amoeba).